A 164-amino-acid chain; its full sequence is S-ribosylhomocysteine lyase (164 aa).

Fe cation contacts are provided by histidine 54, histidine 58, and cysteine 128.

This sequence belongs to the LuxS family. In terms of assembly, homodimer. Fe cation serves as cofactor.

It carries out the reaction S-(5-deoxy-D-ribos-5-yl)-L-homocysteine = (S)-4,5-dihydroxypentane-2,3-dione + L-homocysteine. Involved in the synthesis of autoinducer 2 (AI-2) which is secreted by bacteria and is used to communicate both the cell density and the metabolic potential of the environment. The regulation of gene expression in response to changes in cell density is called quorum sensing. Catalyzes the transformation of S-ribosylhomocysteine (RHC) to homocysteine (HC) and 4,5-dihydroxy-2,3-pentadione (DPD). The protein is S-ribosylhomocysteine lyase of Campylobacter jejuni subsp. jejuni serotype O:23/36 (strain 81-176).